We begin with the raw amino-acid sequence, 930 residues long: MSKKRLYEIAKELGKESKEVVARAKELGLDVKSHSSSVEEAVAAKIAASFKPAAAPKVEAKPAAPKVSAEKKAEKSEPAKPAVAKEEAKPAEPVAPKTEKVAAKPQSRNFKAEREARAKEQAERRKQNKGNNRDQQQNGNRQKNDGRNGGKQGQSNRDNRRFNDQAKKQQGQQKRRNERRQQEDKRSNQAAPRIDFKARAAALKAEQNAEYARSSEERFKQYQAAKEALAQANKRKEPEEIFEEAAKLAEQAQQVQAVVEVVPEKKEPAVDTRRKKQARPDKNRDDYDHEEDGPRKQQKNRSSQNQVRNQKNSNWNNNKKNKKGNNKNNRNQTPKPVTERKFHELPTEFEYTDGMTVAEIAKRIKREPAEIVKKLFMMGVMATQNQSLDGETIELLMVDYGIEAKQKVEVDNADIERFFVEDGYLNEDELVERPPVVTIMGHVDHGKTTLLDTLRNSRVATGEAGGITQHIGAYQIVENGKKITFLDTPGHAAFTSMRARGASVTDITILVVAADDGVMPQTIEAINHSKAANVPIIVAINKIDKPGANPERVIGELAEHGVMSTAWGGDSEFVEISAKFNQNIEELLETVLLVAEIQELKADPTVRAIGTVIEARLDKGKGAVATLLVQQGTLNVQDPIVVGNTFGRVRAMTNDLGRRVKVAGPSTPVSITGLNEAPMAGDHFAVYEDEKSARAAGEERAKRALMKQRQATQRVSLENLFDTLKAGELKSVNVIIKADVQGSVEALSASLQKIDVEGVKVTIVHSAVGAINESDVTLAEASNAFIVGFNVRPTPQARQQAEADDVEIRLHSIIYKVIEEMEEAMKGMLDPEFEEKVIGEAVIRETFKVSKVGTIGGFMVINGKVARDSKVRVIRDGVVIYDGELASLKHYKDDVKEVTNGREGGLMIDGYNDIKMDDVIEAYVMEEIKR.

A compositionally biased stretch (low complexity) spans 50 to 67; that stretch reads FKPAAAPKVEAKPAAPKV. 2 disordered regions span residues 50 to 217 and 260 to 346; these read FKPA…SSEE and EVVP…HELP. Basic and acidic residues-rich tracts occupy residues 68–90 and 110–125; these read SAEKKAEKSEPAKPAVAKEEAKP and FKAEREARAKEQAERR. Positions 129–141 are enriched in low complexity; that stretch reads KGNNRDQQQNGNR. Basic and acidic residues-rich tracts occupy residues 157–167 and 262–295; these read RDNRRFNDQAK and VPEKKEPAVDTRRKKQARPDKNRDDYDHEEDGPR. A compositionally biased stretch (low complexity) spans 309 to 318; it reads NQKNSNWNNN. A compositionally biased stretch (basic and acidic residues) spans 337 to 346; that stretch reads VTERKFHELP. Residues 432–599 form the tr-type G domain; that stretch reads ERPPVVTIMG…TVLLVAEIQE (168 aa). The interval 441–448 is G1; sequence GHVDHGKT. A GTP-binding site is contributed by 441–448; the sequence is GHVDHGKT. The tract at residues 466–470 is G2; that stretch reads GITQH. Residues 487–490 form a G3 region; sequence DTPG. Residues 487–491 and 541–544 contribute to the GTP site; these read DTPGH and NKID. The tract at residues 541 to 544 is G4; it reads NKID. Residues 577–579 are G5; it reads SAK.

This sequence belongs to the TRAFAC class translation factor GTPase superfamily. Classic translation factor GTPase family. IF-2 subfamily.

Its subcellular location is the cytoplasm. Its function is as follows. One of the essential components for the initiation of protein synthesis. Protects formylmethionyl-tRNA from spontaneous hydrolysis and promotes its binding to the 30S ribosomal subunits. Also involved in the hydrolysis of GTP during the formation of the 70S ribosomal complex. In Streptococcus pneumoniae (strain Taiwan19F-14), this protein is Translation initiation factor IF-2.